A 154-amino-acid chain; its full sequence is Superoxide dismutase [Cu-Zn] 1 (154 aa).

Positions 47, 49, and 64 each coordinate Cu cation. A disulfide bond links C58 and C147. H64, H72, H81, and D84 together coordinate Zn(2+). H121 is a Cu cation binding site. Residue R144 coordinates substrate.

Belongs to the Cu-Zn superoxide dismutase family. As to quaternary structure, homodimer. Cu cation serves as cofactor. Zn(2+) is required as a cofactor.

The protein resides in the cytoplasm. It catalyses the reaction 2 superoxide + 2 H(+) = H2O2 + O2. Destroys radicals which are normally produced within the cells and which are toxic to biological systems. The protein is Superoxide dismutase [Cu-Zn] 1 (SOD1) of Debaryomyces hansenii (strain ATCC 36239 / CBS 767 / BCRC 21394 / JCM 1990 / NBRC 0083 / IGC 2968) (Yeast).